Consider the following 405-residue polypeptide: Acetate kinase (405 aa).

N7 provides a ligand contact to Mg(2+). Residue K14 coordinates ATP. R90 is a substrate binding site. D147 (proton donor/acceptor) is an active-site residue. Residues 207–211, 282–284, and 331–335 contribute to the ATP site; these read HLGNG, DFR, and GVGEN. E384 serves as a coordination point for Mg(2+).

It belongs to the acetokinase family. As to quaternary structure, homodimer. The cofactor is Mg(2+). It depends on Mn(2+) as a cofactor.

Its subcellular location is the cytoplasm. It carries out the reaction acetate + ATP = acetyl phosphate + ADP. The protein operates within metabolic intermediate biosynthesis; acetyl-CoA biosynthesis; acetyl-CoA from acetate: step 1/2. Catalyzes the formation of acetyl phosphate from acetate and ATP. Can also catalyze the reverse reaction. The chain is Acetate kinase from Clostridium kluyveri (strain ATCC 8527 / DSM 555 / NBRC 12016 / NCIMB 10680 / K1).